The primary structure comprises 429 residues: Adenylosuccinate synthetase (429 aa).

Residues 12–18 (GDEGKGK) and 40–42 (GHT) each bind GTP. Asp-13 serves as the catalytic Proton acceptor. Positions 13 and 40 each coordinate Mg(2+). IMP contacts are provided by residues 13–16 (DEGK), 38–41 (NAGH), Thr-128, Arg-142, Gln-223, Thr-238, and Arg-302. Residue His-41 is the Proton donor of the active site. Residue 298–304 (TVTKRPR) coordinates substrate. Residues Arg-304, 330-332 (CLD), and 412-414 (SVG) contribute to the GTP site.

The protein belongs to the adenylosuccinate synthetase family. In terms of assembly, homodimer. The cofactor is Mg(2+).

The protein resides in the cytoplasm. It catalyses the reaction IMP + L-aspartate + GTP = N(6)-(1,2-dicarboxyethyl)-AMP + GDP + phosphate + 2 H(+). It participates in purine metabolism; AMP biosynthesis via de novo pathway; AMP from IMP: step 1/2. Its function is as follows. Plays an important role in the de novo pathway of purine nucleotide biosynthesis. Catalyzes the first committed step in the biosynthesis of AMP from IMP. This is Adenylosuccinate synthetase from Lactiplantibacillus plantarum (strain ATCC BAA-793 / NCIMB 8826 / WCFS1) (Lactobacillus plantarum).